We begin with the raw amino-acid sequence, 992 residues long: Vacuolar membrane protease (992 aa).

The Cytoplasmic segment spans residues 1–24; the sequence is MSPAMANPRVRKFNPIAFTPLPVT. The helical transmembrane segment at 25–45 threads the bilayer; it reads FITTIVYLAVLILVLVTYLVV. Over 46 to 390 the chain is Vacuolar; that stretch reads PPAPTLEMSP…SAFAVFRLHT (345 aa). N-linked (GlcNAc...) asparagine glycans are attached at residues asparagine 59, asparagine 115, and asparagine 118. Positions 174 and 186 each coordinate Zn(2+). Glutamate 220 acts as the Proton acceptor in catalysis. Glutamate 221 contributes to the Zn(2+) binding site. N-linked (GlcNAc...) asparagine glycosylation occurs at asparagine 237. Residues glutamate 246 and histidine 319 each coordinate Zn(2+). Residues 391–411 form a helical membrane-spanning segment; sequence LFALSVTLLVIGPLVLFITSI. The Cytoplasmic portion of the chain corresponds to 412–446; the sequence is ALSKTDRMYLFSMSKSLGGASETVSLRGLRGLFRT. A helical transmembrane segment spans residues 447–467; sequence PIILTVTTVIPIGLAYLLEKI. The Vacuolar portion of the chain corresponds to 468 to 474; sequence NPYIVHS. Residues 475-495 traverse the membrane as a helical segment; that stretch reads SQFAVWSMMLSVWIFVAWFLA. Over 496–508 the chain is Cytoplasmic; that stretch reads RVADFFRPSALHR. The helical transmembrane segment at 509–529 threads the bilayer; it reads AYSYTWIFIVTWIMLVISTVY. The Vacuolar portion of the chain corresponds to 530-533; sequence ANQK. A helical membrane pass occupies residues 534-554; that stretch reads GIAAGYFTFFYFAAVFLATWV. The Cytoplasmic portion of the chain corresponds to 555–671; that stretch reads SYLELFSLPR…WSWTLPRWTW (117 aa). The disordered stretch occupies residues 579–620; the sequence is RSSSLSSRLLTPSADELPSDIGPNGAENVGDPDETDPTESTS. A helical membrane pass occupies residues 672–692; the sequence is ILQLLLLAPIVIILVGQVGLL. Residues 693-708 lie on the Vacuolar side of the membrane; the sequence is LTTAMSQIGSDGVSTF. Residues 709 to 729 form a helical membrane-spanning segment; the sequence is IVYLACALFSTLLFAPLLPFI. Residues 730 to 736 are Cytoplasmic-facing; the sequence is HRFTYHV. A helical transmembrane segment spans residues 737 to 757; sequence PTFLLLIFIGTLIYNLVAFPF. Residues 758–992 lie on the Vacuolar side of the membrane; the sequence is SPANRLKIFF…VEASHDFIIQ (235 aa). N-linked (GlcNAc...) asparagine glycosylation is found at asparagine 805, asparagine 846, and asparagine 954.

This sequence belongs to the peptidase M28 family. Zn(2+) serves as cofactor.

The protein localises to the vacuole membrane. In terms of biological role, may be involved in vacuolar sorting and osmoregulation. The protein is Vacuolar membrane protease of Paracoccidioides brasiliensis (strain Pb03).